The chain runs to 424 residues: Histidine--tRNA ligase (424 aa).

It belongs to the class-II aminoacyl-tRNA synthetase family. As to quaternary structure, homodimer.

The protein resides in the cytoplasm. The catalysed reaction is tRNA(His) + L-histidine + ATP = L-histidyl-tRNA(His) + AMP + diphosphate + H(+). The protein is Histidine--tRNA ligase of Shewanella amazonensis (strain ATCC BAA-1098 / SB2B).